A 476-amino-acid chain; its full sequence is Bifunctional protein HldE (476 aa).

The segment at 1-318 is ribokinase; sequence MKPILPDYSQ…AEAIHGSQDT (318 aa). 195–198 provides a ligand contact to ATP; the sequence is NMAE. Asp264 is a catalytic residue. Residues 344 to 476 form a cytidylyltransferase region; sequence MTNGCFDILH…IIKAIKGGRG (133 aa).

The protein in the N-terminal section; belongs to the carbohydrate kinase PfkB family. This sequence in the C-terminal section; belongs to the cytidylyltransferase family. In terms of assembly, homodimer.

It catalyses the reaction D-glycero-beta-D-manno-heptose 7-phosphate + ATP = D-glycero-beta-D-manno-heptose 1,7-bisphosphate + ADP + H(+). The catalysed reaction is D-glycero-beta-D-manno-heptose 1-phosphate + ATP + H(+) = ADP-D-glycero-beta-D-manno-heptose + diphosphate. It functions in the pathway nucleotide-sugar biosynthesis; ADP-L-glycero-beta-D-manno-heptose biosynthesis; ADP-L-glycero-beta-D-manno-heptose from D-glycero-beta-D-manno-heptose 7-phosphate: step 1/4. Its pathway is nucleotide-sugar biosynthesis; ADP-L-glycero-beta-D-manno-heptose biosynthesis; ADP-L-glycero-beta-D-manno-heptose from D-glycero-beta-D-manno-heptose 7-phosphate: step 3/4. Catalyzes the phosphorylation of D-glycero-D-manno-heptose 7-phosphate at the C-1 position to selectively form D-glycero-beta-D-manno-heptose-1,7-bisphosphate. Functionally, catalyzes the ADP transfer from ATP to D-glycero-beta-D-manno-heptose 1-phosphate, yielding ADP-D-glycero-beta-D-manno-heptose. This Vibrio atlanticus (strain LGP32) (Vibrio splendidus (strain Mel32)) protein is Bifunctional protein HldE.